The primary structure comprises 171 residues: Large ribosomal subunit protein bL9 (171 aa).

The protein belongs to the bacterial ribosomal protein bL9 family.

Functionally, binds to the 23S rRNA. This Orientia tsutsugamushi (strain Ikeda) (Rickettsia tsutsugamushi) protein is Large ribosomal subunit protein bL9.